Consider the following 654-residue polypeptide: Acetyl-coenzyme A synthetase (654 aa).

Residues R191–Q194 and T315 each bind CoA. ATP is bound by residues G391 to P393, D415 to T420, D506, and R521. S529 is a CoA binding site. R532 is a binding site for ATP. Residues V543, H545, and V548 each contribute to the Mg(2+) site. K615 carries the post-translational modification N6-acetyllysine.

This sequence belongs to the ATP-dependent AMP-binding enzyme family. The cofactor is Mg(2+). Post-translationally, acetylated. Deacetylation by the SIR2-homolog deacetylase activates the enzyme.

The enzyme catalyses acetate + ATP + CoA = acetyl-CoA + AMP + diphosphate. Catalyzes the conversion of acetate into acetyl-CoA (AcCoA), an essential intermediate at the junction of anabolic and catabolic pathways. AcsA undergoes a two-step reaction. In the first half reaction, AcsA combines acetate with ATP to form acetyl-adenylate (AcAMP) intermediate. In the second half reaction, it can then transfer the acetyl group from AcAMP to the sulfhydryl group of CoA, forming the product AcCoA. The chain is Acetyl-coenzyme A synthetase from Gemmatimonas aurantiaca (strain DSM 14586 / JCM 11422 / NBRC 100505 / T-27).